The primary structure comprises 236 residues: Thiamine import ATP-binding protein ThiQ (236 aa).

The ABC transporter domain maps to 2–230 (LKLEKITYLY…SAAKASVLGI (229 aa)). 32 to 39 (GPSGAGKS) provides a ligand contact to ATP.

This sequence belongs to the ABC transporter superfamily. Thiamine importer (TC 3.A.1.19.1) family. The complex is composed of two ATP-binding proteins (ThiQ), two transmembrane proteins (ThiP) and a solute-binding protein (ThiB).

It is found in the cell inner membrane. It carries out the reaction thiamine(out) + ATP + H2O = thiamine(in) + ADP + phosphate + H(+). Part of the ABC transporter complex ThiBPQ involved in thiamine import. Responsible for energy coupling to the transport system. This Yersinia pseudotuberculosis serotype I (strain IP32953) protein is Thiamine import ATP-binding protein ThiQ.